Here is a 432-residue protein sequence, read N- to C-terminus: Glutamyl-tRNA reductase (432 aa).

Substrate contacts are provided by residues 49 to 52 (TCNR), S107, 112 to 114 (ETQ), and Q118. The Nucleophile role is filled by C50. 186 to 191 (GAGEMG) contributes to the NADP(+) binding site.

It belongs to the glutamyl-tRNA reductase family. In terms of assembly, homodimer.

It catalyses the reaction (S)-4-amino-5-oxopentanoate + tRNA(Glu) + NADP(+) = L-glutamyl-tRNA(Glu) + NADPH + H(+). It participates in porphyrin-containing compound metabolism; protoporphyrin-IX biosynthesis; 5-aminolevulinate from L-glutamyl-tRNA(Glu): step 1/2. In terms of biological role, catalyzes the NADPH-dependent reduction of glutamyl-tRNA(Glu) to glutamate 1-semialdehyde (GSA). The polypeptide is Glutamyl-tRNA reductase (Campylobacter jejuni (strain RM1221)).